The sequence spans 292 residues: Syntaxin-19 (292 aa).

The t-SNARE coiled-coil homology domain maps to 207–269 (LSEIEQRHKE…NNTKEKFGLA (63 aa)).

It belongs to the syntaxin family. Interacts with EGFR. In terms of tissue distribution, expressed in stomach, lung and skin (at protein level). In stomach, strongly expressed in the mucosa of the fundus, in epithelial cells of gastric pits, and in gastric glands (at protein level). In skin, expressed in the epidermis, dermis, and epithelial layer of the hair bulb (at protein level).

It localises to the cell membrane. The protein localises to the cytoplasm. Its function is as follows. Plays a role in endosomal trafficking of the epidermal growth factor receptor (EGFR). This chain is Syntaxin-19, found in Mus musculus (Mouse).